The chain runs to 83 residues: MKPWIIVLTVSAHGILVFLHVLGSLKDDLEEIDQCWVQPPTRFCGKRCTKVRKCVSPNYTCCWTYCGNICLNNEEPFETLMKV.

Residues 1–24 (MKPWIIVLTVSAHGILVFLHVLGS) form the signal peptide.

Its subcellular location is the secreted. The chain is Protein WFDC9 (Wfdc9) from Mus musculus (Mouse).